We begin with the raw amino-acid sequence, 373 residues long: Queuine tRNA-ribosyltransferase (373 aa).

The active-site Proton acceptor is Asp-90. Substrate contacts are provided by residues 90-94 (DSGGF), Asp-144, Gln-193, and Gly-220. Positions 251–257 (GVGTPED) are RNA binding. Asp-270 acts as the Nucleophile in catalysis. The tract at residues 275–279 (TRNAR) is RNA binding; important for wobble base 34 recognition. Residues Cys-308, Cys-310, Cys-313, and His-339 each contribute to the Zn(2+) site.

Belongs to the queuine tRNA-ribosyltransferase family. Homodimer. Within each dimer, one monomer is responsible for RNA recognition and catalysis, while the other monomer binds to the replacement base PreQ1. The cofactor is Zn(2+).

It catalyses the reaction 7-aminomethyl-7-carbaguanine + guanosine(34) in tRNA = 7-aminomethyl-7-carbaguanosine(34) in tRNA + guanine. The protein operates within tRNA modification; tRNA-queuosine biosynthesis. Functionally, catalyzes the base-exchange of a guanine (G) residue with the queuine precursor 7-aminomethyl-7-deazaguanine (PreQ1) at position 34 (anticodon wobble position) in tRNAs with GU(N) anticodons (tRNA-Asp, -Asn, -His and -Tyr). Catalysis occurs through a double-displacement mechanism. The nucleophile active site attacks the C1' of nucleotide 34 to detach the guanine base from the RNA, forming a covalent enzyme-RNA intermediate. The proton acceptor active site deprotonates the incoming PreQ1, allowing a nucleophilic attack on the C1' of the ribose to form the product. After dissociation, two additional enzymatic reactions on the tRNA convert PreQ1 to queuine (Q), resulting in the hypermodified nucleoside queuosine (7-(((4,5-cis-dihydroxy-2-cyclopenten-1-yl)amino)methyl)-7-deazaguanosine). The polypeptide is Queuine tRNA-ribosyltransferase (Campylobacter jejuni (strain RM1221)).